Consider the following 366-residue polypeptide: Agamous-like MADS-box protein AGL36 (366 aa).

One can recognise an MADS-box domain in the interval 1 to 59; that stretch reads MKKVKLSLIANERSRKTSFIKRKDGIFKKLHELSTLCGVQACALIYSPFIPVPESWPSR. The stretch at 86–115 forms a coiled coil; it reads TYLMERITKAKEQLKNLAAENRELQVRRFM.

As to quaternary structure, interacts with AGL62.

It is found in the nucleus. Probable transcription factor. The chain is Agamous-like MADS-box protein AGL36 (AGL36) from Arabidopsis thaliana (Mouse-ear cress).